Here is a 502-residue protein sequence, read N- to C-terminus: Glycerol kinase (502 aa).

Residue Thr-13 participates in ADP binding. Thr-13, Thr-14, and Ser-15 together coordinate ATP. Thr-13 contributes to the sn-glycerol 3-phosphate binding site. Arg-17 contacts ADP. Residues Arg-83, Glu-84, Tyr-135, and Asp-245 each contribute to the sn-glycerol 3-phosphate site. The glycerol site is built by Arg-83, Glu-84, Tyr-135, Asp-245, and Gln-246. Thr-267 and Gly-310 together coordinate ADP. ATP is bound by residues Thr-267, Gly-310, Gln-314, and Gly-411. ADP is bound by residues Gly-411 and Asn-415.

The protein belongs to the FGGY kinase family. As to quaternary structure, homotetramer and homodimer (in equilibrium).

The enzyme catalyses glycerol + ATP = sn-glycerol 3-phosphate + ADP + H(+). It participates in polyol metabolism; glycerol degradation via glycerol kinase pathway; sn-glycerol 3-phosphate from glycerol: step 1/1. With respect to regulation, activated by phosphorylation and inhibited by fructose 1,6-bisphosphate (FBP). Functionally, key enzyme in the regulation of glycerol uptake and metabolism. Catalyzes the phosphorylation of glycerol to yield sn-glycerol 3-phosphate. The chain is Glycerol kinase from Lactobacillus delbrueckii subsp. bulgaricus (strain ATCC BAA-365 / Lb-18).